The sequence spans 239 residues: Large ribosomal subunit protein uL2 (239 aa).

2 disordered regions span residues methionine 1–proline 20 and phenylalanine 202–arginine 239.

Belongs to the universal ribosomal protein uL2 family. Part of the 50S ribosomal subunit. Forms a bridge to the 30S subunit in the 70S ribosome.

In terms of biological role, one of the primary rRNA binding proteins. Required for association of the 30S and 50S subunits to form the 70S ribosome, for tRNA binding and peptide bond formation. It has been suggested to have peptidyltransferase activity; this is somewhat controversial. Makes several contacts with the 16S rRNA in the 70S ribosome. This Methanosphaerula palustris (strain ATCC BAA-1556 / DSM 19958 / E1-9c) protein is Large ribosomal subunit protein uL2.